The following is a 375-amino-acid chain: Dual-specificity RNA methyltransferase RlmN (375 aa).

Glu-93 functions as the Proton acceptor in the catalytic mechanism. The Radical SAM core domain occupies 99–346 (ETNRGTLCVS…TTTRKTRGDD (248 aa)). The cysteines at positions 106 and 351 are disulfide-linked. The [4Fe-4S] cluster site is built by Cys-113, Cys-117, and Cys-120. Residues 177–178 (GE), Ser-209, 231–233 (SLH), and Asn-308 contribute to the S-adenosyl-L-methionine site. Cys-351 (S-methylcysteine intermediate) is an active-site residue.

This sequence belongs to the radical SAM superfamily. RlmN family. Requires [4Fe-4S] cluster as cofactor.

The protein resides in the cytoplasm. The enzyme catalyses adenosine(2503) in 23S rRNA + 2 reduced [2Fe-2S]-[ferredoxin] + 2 S-adenosyl-L-methionine = 2-methyladenosine(2503) in 23S rRNA + 5'-deoxyadenosine + L-methionine + 2 oxidized [2Fe-2S]-[ferredoxin] + S-adenosyl-L-homocysteine. It catalyses the reaction adenosine(37) in tRNA + 2 reduced [2Fe-2S]-[ferredoxin] + 2 S-adenosyl-L-methionine = 2-methyladenosine(37) in tRNA + 5'-deoxyadenosine + L-methionine + 2 oxidized [2Fe-2S]-[ferredoxin] + S-adenosyl-L-homocysteine. Specifically methylates position 2 of adenine 2503 in 23S rRNA and position 2 of adenine 37 in tRNAs. m2A2503 modification seems to play a crucial role in the proofreading step occurring at the peptidyl transferase center and thus would serve to optimize ribosomal fidelity. This chain is Dual-specificity RNA methyltransferase RlmN, found in Azoarcus sp. (strain BH72).